The primary structure comprises 473 residues: Glutamate--tRNA ligase 2 (473 aa).

Residues 11–21 (PSPTGYLHIGG) carry the 'HIGH' region motif. Positions 113-133 (KARAEGRPPRYDGRWRDRDPS) are enriched in basic and acidic residues. A disordered region spans residues 113–136 (KARAEGRPPRYDGRWRDRDPSEAP). A 'KMSKS' region motif is present at residues 240–244 (KLSKR). K243 contacts ATP.

The protein belongs to the class-I aminoacyl-tRNA synthetase family. Glutamate--tRNA ligase type 1 subfamily. Monomer.

It localises to the cytoplasm. The enzyme catalyses tRNA(Glu) + L-glutamate + ATP = L-glutamyl-tRNA(Glu) + AMP + diphosphate. Its function is as follows. Catalyzes the attachment of glutamate to tRNA(Glu) in a two-step reaction: glutamate is first activated by ATP to form Glu-AMP and then transferred to the acceptor end of tRNA(Glu). The sequence is that of Glutamate--tRNA ligase 2 from Brucella suis biovar 1 (strain 1330).